The sequence spans 429 residues: Z-DNA-binding protein 1 (429 aa).

Z-binding domains lie at 8–70 (PGRE…CLGG) and 103–166 (PQFS…TIYR). Residues 68–107 (LGGTDPEGEGPAELALSSPAERPQQHAATIPETPGPQFSQ) are disordered. 2 consecutive short sequence motifs (RIP homotypic interaction motif (RHIM)) follow at residues 195-219 (NSWI…RQTV) and 253-277 (DIHM…LHGV). Disordered regions lie at residues 277-299 (VPSE…AAGP) and 339-429 (KMSI…GGGI). A compositionally biased stretch (gly residues) spans 347 to 358 (AGPGGVAGSGEG). Over residues 407 to 420 (KAAEGSHYVDEASH) the composition is skewed to basic and acidic residues.

In terms of assembly, homodimer. Interacts (via RIP homotypic interaction motif) with RIPK3; leading to RIPK3 activation and necroptosis; interaction is enhanced by CASP6. Interacts (via RIP homotypic interaction motif) with RIPK1. Component of the AIM2 PANoptosome complex, a multiprotein complex that drives inflammatory cell death (PANoptosis). (Microbial infection) Interacts (via RIP homotypic interaction motif/RHIM) with herpes simplex virus 1/HHV-1 protein RIR1/ICP6 (via RHIM); this interaction may induce heteromeric amyloid assemblies and prevent necroptosis activation. Interacts with human herpes simplex virus 1/HHV-1 protein ICP0. In terms of processing, phosphorylated. Highly expressed in lymphatic tissues including lymph node, leukocytes, tonsil, bone marrow and spleen. Expressed to a lesser extent in thymus, lung and liver.

The protein localises to the cytoplasm. Its subcellular location is the nucleus. ZBP1-dependent necroptosis is normally inhibited by RIPK1: RIPK1 inhibits the ZBP1-induced activation of RIPK3 via FADD-mediated recruitment of CASP8, which cleaves RIPK1 and limits TNF-induced necroptosis. In terms of biological role, key innate sensor that recognizes and binds Z-RNA structures, which are produced by a number of viruses, such as herpesvirus, orthomyxovirus or flavivirus, and triggers different forms of cell death. ZBP1 acts as an essential mediator of pyroptosis, necroptosis and apoptosis (PANoptosis), an integral part of host defense against pathogens, by activating RIPK3, caspase-8 (CASP8), and the NLRP3 inflammasome. Key activator of necroptosis, a programmed cell death process in response to death-inducing TNF-alpha family members, via its ability to bind Z-RNA: once activated upon Z-RNA-binding, ZBP1 interacts and stimulates RIPK3 kinase, which phosphorylates and activates MLKL, triggering execution of programmed necrosis. In addition to TNF-induced necroptosis, necroptosis can also take place in the nucleus in response to orthomyxoviruses infection: ZBP1 recognizes and binds Z-RNA structures that are produced in infected nuclei by orthomyxoviruses, such as the influenza A virus (IAV), leading to ZBP1 activation, RIPK3 stimulation and subsequent MLKL phosphorylation, triggering disruption of the nuclear envelope and leakage of cellular DNA into the cytosol. ZBP1-dependent cell death in response to IAV infection promotes interleukin-1 alpha (IL1A) induction in an NLRP3-inflammasome-independent manner: IL1A expression is required for the optimal interleukin-1 beta (IL1B) production, and together, these cytokines promote infiltration of inflammatory neutrophils to the lung, leading to the formation of neutrophil extracellular traps. In addition to its direct role in driving necroptosis via its ability to sense Z-RNAs, also involved in PANoptosis triggered in response to bacterial infection: component of the AIM2 PANoptosome complex, a multiprotein complex that triggers PANoptosis. Also acts as the apical sensor of fungal infection responsible for activating PANoptosis. Involved in CASP8-mediated cell death via its interaction with RIPK1 but independently of its ability to sense Z-RNAs. In some cell types, also able to restrict viral replication by promoting cell death-independent responses. In response to Zika virus infection in neurons, promotes a cell death-independent pathway that restricts viral replication: together with RIPK3, promotes a death-independent transcriptional program that modifies the cellular metabolism via up-regulation expression of the enzyme ACOD1/IRG1 and production of the metabolite itaconate. Itaconate inhibits the activity of succinate dehydrogenase, generating a metabolic state in neurons that suppresses replication of viral genomes. Functionally, (Microbial infection) In case of herpes simplex virus 1/HHV-1 infection, forms hetero-amyloid structures with HHV-1 protein RIR1/ICP6 which may inhibit ZBP1-mediated necroptosis, thereby preventing host cell death pathway and allowing viral evasion. The sequence is that of Z-DNA-binding protein 1 from Homo sapiens (Human).